We begin with the raw amino-acid sequence, 444 residues long: MTVTTFSELELDESLLEALQDKGFTRPTAIQAAAIPPALDGRDVLGSAPTGTGKTAAYLLPALQHLLDFPRKKSGPPRILILTPTRELAMQVSDHARELAKHTHLDIATITGGVAYMNHAEVFSENQDIVVATTGRLLQYIKEENFDCRAVETLILDEADRMLDMGFAQDIEHIAGETRWRKQTLLFSATLEGDAIQDFAERLLEDPVEVSANPSTRERKKIHQWYYRADDLEHKTALLVHLLKQPEATRSIVFVRKRERVHELANWLREAGINNCYLEGEMVQGKRNEAIKRLTEGRVNVLVATDVAARGIDIPDVSHVFNFDMPRSGDTYLHRIGRTARAGRKGTAISLVEAHDHLLLGKVGRYIEEPIKARVIDELRPKTRAPSEKQTGKPSKKVLAKRAEKKKAKEKEKPRVKKRHRDTKNIGKRRKPSGTGVPPQTTEE.

A Q motif motif is present at residues 4 to 32 (TTFSELELDESLLEALQDKGFTRPTAIQA). The Helicase ATP-binding domain occupies 35–209 (IPPALDGRDV…AERLLEDPVE (175 aa)). 48–55 (APTGTGKT) contributes to the ATP binding site. Positions 157–160 (DEAD) match the DEAD box motif. The Helicase C-terminal domain maps to 238–387 (LLVHLLKQPE…ELRPKTRAPS (150 aa)). Residues 382 to 391 (KTRAPSEKQT) are compositionally biased toward basic and acidic residues. The tract at residues 382–444 (KTRAPSEKQT…TGVPPQTTEE (63 aa)) is disordered. 2 stretches are compositionally biased toward basic residues: residues 394–406 (PSKK…AEKK) and 414–432 (PRVK…RRKP).

Belongs to the DEAD box helicase family. SrmB subfamily. As to quaternary structure, interacts with the 50S ribosomal subunit. Forms a complex with the 50S ribosomal proteins L4 and L24, and a region near the 5'-end of 23S rRNA.

The protein resides in the cytoplasm. It catalyses the reaction ATP + H2O = ADP + phosphate + H(+). Functionally, DEAD-box RNA helicase involved in the assembly of the 50S ribosomal subunit at low temperature. Exhibits RNA-stimulated ATP hydrolysis and RNA unwinding activity. Acts before DeaD. The chain is ATP-dependent RNA helicase SrmB from Escherichia coli (strain K12).